We begin with the raw amino-acid sequence, 504 residues long: Maturase K (504 aa).

This sequence belongs to the intron maturase 2 family. MatK subfamily.

Its subcellular location is the plastid. It localises to the chloroplast. Functionally, usually encoded in the trnK tRNA gene intron. Probably assists in splicing its own and other chloroplast group II introns. In Gossypium turneri (Cotton), this protein is Maturase K.